Here is a 250-residue protein sequence, read N- to C-terminus: MKNSYQQLTTNLEYLKLKQMAQHLGDVVDFSINNELSFVETLVKLTNYEIDVREQNMIHSMVKMGAFPHRKEVDEFDFEFQPSINKQQILDFISLRFLEQQENIVFLGPSGVGKTHLATSIGIAAAKKRTSTYFIKCHDLLQNLKRAKIENRLESRLKHYTKYKLLIIDEIGYLPIDPEDAKLFFQLIDMRYEKRSTILTTNINFKSWDEVFQDPKLANAILDRVLHHATVVSIVGQSYRIKDHFSKEND.

108 to 115 lines the ATP pocket; that stretch reads GPSGVGKT.

It belongs to the IS21/IS1162 putative ATP-binding protein family.

The sequence is that of Insertion sequence IS232 putative ATP-binding protein from Bacillus thuringiensis subsp. berliner.